Consider the following 1023-residue polypeptide: 2-oxoglutarate dehydrogenase complex component E1 (1023 aa).

The transit peptide at 1 to 40 (MFHLRTCAAKLRPLTASQTVKTFSQNKPAAIRTFQQIRCY) directs the protein to the mitochondrion. Lys74 is modified (N6-succinyllysine). A Phosphoserine modification is found at Ser100. Residues His143, Asp156, and Asp158 each contribute to the Ca(2+) site. A thiamine diphosphate-binding site is contributed by Arg312. N6-acetyllysine is present on Lys401. Thiamine diphosphate-binding residues include Asp411, Asn444, and Ile446. Residues Asp411, Asn444, and Ile446 each coordinate Mg(2+). Lys534 is covalently cross-linked (Glycyl lysine isopeptide (Lys-Gly) (interchain with G-Cter in ubiquitin)). N6-succinyllysine is present on Lys564. Position 676 (Gln676) interacts with thiamine diphosphate. Residues 933–939 (LSPFPFD) form a recognized by alloreactive CD8 cytotoxic T-lymphocytes in association with a class I MHC protein region. An N6-acetyllysine modification is found at Lys970.

The protein belongs to the alpha-ketoglutarate dehydrogenase family. In terms of assembly, homodimer. The 2-oxoglutarate dehydrogenase complex is composed of OGDH (2-oxoglutarate dehydrogenase; E1), DLST (dihydrolipoamide succinyltransferase; E2), DLD (dihydrolipoamide dehydrogenase; E3) and the assembly factor KGD4. It contains multiple copies of the three enzymatic components (E1, E2 and E3). In the nucleus, the 2-oxoglutarate dehydrogenase complex associates with KAT2A. Interacts with ABHD11; this interaction maintains the functional lipoylation of the 2-oxoglutarate dehydrogenase complex. It depends on thiamine diphosphate as a cofactor. Mg(2+) is required as a cofactor.

Its subcellular location is the mitochondrion. It is found in the nucleus. The catalysed reaction is N(6)-[(R)-lipoyl]-L-lysyl-[protein] + 2-oxoglutarate + H(+) = N(6)-[(R)-S(8)-succinyldihydrolipoyl]-L-lysyl-[protein] + CO2. Calcium ions and ADP stimulate, whereas ATP and NADH reduce catalytic activity. 2-oxoglutarate dehydrogenase (E1o) component of the 2-oxoglutarate dehydrogenase complex (OGDHC). Participates in the first step, rate limiting for the overall conversion of 2-oxoglutarate to succinyl-CoA and CO(2) catalyzed by the whole OGDHC. Catalyzes the irreversible decarboxylation of 2-oxoglutarate (alpha-ketoglutarate) via the thiamine diphosphate (ThDP) cofactor and subsequent transfer of the decarboxylated acyl intermediate on an oxidized dihydrolipoyl group that is covalently amidated to the E2 enzyme (dihydrolipoyllysine-residue succinyltransferase or DLST). Plays a key role in the Krebs (citric acid) cycle, which is a common pathway for oxidation of fuel molecules, including carbohydrates, fatty acids, and amino acids. Can catalyze the decarboxylation of 2-oxoadipate in vitro, but at a much lower rate than 2-oxoglutarate. Mainly active in the mitochondrion. A fraction of the 2-oxoglutarate dehydrogenase complex also localizes in the nucleus and is required for lysine succinylation of histones: associates with KAT2A on chromatin and provides succinyl-CoA to histone succinyltransferase KAT2A. The polypeptide is 2-oxoglutarate dehydrogenase complex component E1 (Mus musculus (Mouse)).